Here is a 190-residue protein sequence, read N- to C-terminus: Iron-sulfur protein (190 aa).

Residues 8–36 (VIIYANPDHCLSCHSCELACAVAHSGGHD) enclose the 4Fe-4S ferredoxin-type 1 domain. [4Fe-4S] cluster-binding residues include Cys-17, Cys-20, Cys-23, Cys-27, Cys-65, Cys-68, Cys-73, Cys-77, Cys-96, Cys-99, Cys-102, Cys-106, Cys-133, Cys-136, Cys-150, and Cys-154. 4Fe-4S ferredoxin-type domains are found at residues 87 to 116 (GQVQIVEQHCIGCKLCVMVCPFGAITVRSE) and 133 to 164 (CDLCVDWRASTGKTAPACVEACPTKAIRMVDL).

Functionally, the carbon monoxide dehydrogenase (CODH) oxidizes carbon monoxide coupled, via CooF, to the reduction of a hydrogen cation by a hydrogenase (probably CooH). CooF is required in stoichiometric amounts in vitro for anchoring CODH to the membrane as well as for conveying the electrons to the hydrogenase. In Rhodospirillum rubrum, this protein is Iron-sulfur protein (cooF).